A 1838-amino-acid polypeptide reads, in one-letter code: MSAKTEADNTTAANSGGGGVGSGTSSGGGASANGTATPARRLRTRNSTGNGTNSGSESVKKSNANDEPSTPVTPAGATGSHTHAPPGISPAVMERPMPSVPMNHASSSVSASKKYHNSCPHPTPTPAPTGHKKSVHTQPHSSNKFDQGKNEEFHFDTPPECPVFRPTTEEFKNPLAYISKIRSIAEKCGIAKILPPATWSPPFAVDVDKLRFVPRVQRLNELEAKTRVKLNFLDQIAKFWELQGSSLKIPMVERKALDLYTLHRIVQEEGGMEQTTKDRKWAKVANRMQYPSSKSVGATLKAHYERILHPFEVYTSGKVLGPTPTSSGSGSTPVKLEDGGGTDYKAHEIPTRQQIAPPNETNTRRSKRFGNSNASCGLSGVTPTTKPSAGVFVKTETKEEFKRDLLSSFNAVNSGGSPLATGTTANTRGASQKKGGEPPALIVDPLMKYICHICNRGDVEESMLLCDGCDDSYHTFCLLPPLTSIPKGEWLCPRCVVEEVSKPQEAFGFEQAEREYTLQQFGQMADQFKQEYFRKPVHLVPTEMVEREFWRIVSSIDEDVTVEYGADLHTMDHGSGFPTKSSLYLLPGDQEYAESSWNLNNLPLLEDSILGHINADISGMNAPWMYVGMCFAAFCWHNEDHWSYSINYLHWGEPKTWYGVPGSCAEQFEETMKQAAPELFSSQPDLLHQLVTIMNPNILMNNRVPVFRTDQHAGEFVITFPRAYHAGFNQGYNFAEAVNFAPADWLKMGRECVNHYSMLRRFCVFSHDELVCKMALEPAKLTFGIATACYIDMAEMVDTEKKLRKSLLEWGVTRAERRAFELVNDDERHCQECNTTCFLSAVACECNDKLIVCLRHYTVLCGCAPEKHTLIYRYTLDEMPLMLQKLKVKAHSFERWLSRCRDIVDAHTPTSVTLQELQELCKEAETKKFPSSLLIDRLNAAAVEAEKCVTVIQQLGINKVRTRSDHNQEAAQYKLTMEELELFVQEIDNLCCIIDEGASVRELLVLGKQFVERSESQLQLSLESLEESELETLINEGSSLRIELQQLDLLQKRLKQCKWYKRSQGLRETSSKLTYQDVKNLLHIAAADLDPTDPYVDKEMRKLQQIGADIEAWESQAAKYFRRLTQQHELGEIEQFLKSASDINGQVPSHGLLKDALRKAREWLRAVEQLQQNNHVTYCHTLEAMIERGLNIPIQLEELSRMQGHLNSAHQWKDNTACAFLKKGTFYTLLEVLMPRSDAINIDSDLKPRFQDDFLKEKNPAEIVASFKHAEEQELLDMRELRRQNMNKNPMRDMFCLCKSEFRNLMFNCQLCRDWFHEDCVPPPSATNQNGIVNGGSGPGTNRPKWLCPSCVRSKRPRLETILPLLVQLQQLPIRLPEDEALRCLAERAMNWQDRARKALSSPDVSAAQEAIMAQQQQKRRSEGGAGVGNISSPRKPRRRGSLTKEASGSTESDADDDDDEDECRLRIVEDNFSNDEDEPRTAPATSTVNSDLLKLLSDSEIENLLDLMMEGDLLEVSLDETQELWRILETMPPTLLQAEAMERVVQYMQRQRQQHTNPLPTSGAEDSNDSLMVQNSPNSNSNSGGATGSASNSGRNKKRRSNDTGGNSAVPRKKQSTPKQTPGKKGSAAAARKSDAKASPAASTTPGADADAENKQANGGNTNSSTGSGGGNSATTTPTPGSTHKKRKRTSTTATNNNNNNNNNSTNNSNSSTNLNSNTTSGQGAATGGNNATGGQKKHAQRSQQAAQEDDEEECRAENCHKPTGREVDWVQCDGGCNEWFHMYCVGLNRSQIKPDDDYICIRCTKTVAIGTQGSGHSMSVASTTTPGKQRAVQSAR.

A disordered region spans residues 1-150 (MSAKTEADNT…SSNKFDQGKN (150 aa)). Residues 15 to 31 (SGGGGVGSGTSSGGGAS) show a composition bias toward gly residues. Low complexity predominate over residues 45 to 56 (RNSTGNGTNSGS). Residues 136–145 (HTQPHSSNKF) are compositionally biased toward polar residues. A JmjN domain is found at 161–202 (CPVFRPTTEEFKNPLAYISKIRSIAEKCGIAKILPPATWSPP). The region spanning 226–316 (TRVKLNFLDQ…ILHPFEVYTS (91 aa)) is the ARID domain. The segment covering 321–333 (GPTPTSSGSGSTP) has biased composition (low complexity). Disordered stretches follow at residues 321–380 (GPTP…GLSG) and 416–437 (GSPL…KGGE). The residue at position 323 (T323) is a Phosphothreonine. Composition is skewed to polar residues over residues 351–361 (TRQQIAPPNET), 369–380 (FGNSNASCGLSG), and 416–430 (GSPL…TRGA). A PHD-type 1 zinc finger spans residues 448 to 498 (KYICHICNRGDVEESMLLCDGCDDSYHTFCLLPPLTSIPKGEWLCPRCVVE). The 167-residue stretch at 591–757 (EYAESSWNLN…MGRECVNHYS (167 aa)) folds into the JmjC domain. The Fe cation site is built by H637, D640, and H725. Residues 960–1049 (VRTRSDHNQE…LRIELQQLDL (90 aa)) are a coiled coil. Residues 1293–1354 (DMFCLCKSEF…KWLCPSCVRS (62 aa)) form a PHD-type 2 zinc finger. The tract at residues 1401–1462 (SSPDVSAAQE…SDADDDDDED (62 aa)) is disordered. Positions 1407–1417 (AAQEAIMAQQQ) are enriched in low complexity. Phosphoserine is present on residues S1422 and S1433. Over residues 1453–1462 (SDADDDDDED) the composition is skewed to acidic residues. Position 1474 is a phosphoserine (S1474). Positions 1548-1751 (YMQRQRQQHT…QRSQQAAQED (204 aa)) are disordered. Composition is skewed to low complexity over residues 1576–1595 (NSPN…SNSG), 1624–1650 (GKKG…PGAD), 1658–1667 (ANGGNTNSST), 1674–1683 (SATTTPTPGS), and 1692–1736 (STTA…ATGG). S1635 and S1640 each carry phosphoserine. A PHD-type 3 zinc finger spans residues 1753–1808 (EEECRAENCHKPTGREVDWVQCDGGCNEWFHMYCVGLNRSQIKPDDDYICIRCTKT). The interval 1814–1838 (QGSGHSMSVASTTTPGKQRAVQSAR) is disordered.

The protein belongs to the JARID1 histone demethylase family. In terms of assembly, interacts with Myc. Part of a complex containing Lid, Myc and Ash2. The cofactor is Fe(2+).

The protein resides in the nucleus. The catalysed reaction is N(6),N(6),N(6)-trimethyl-L-lysyl(4)-[histone H3] + 3 2-oxoglutarate + 3 O2 = L-lysyl(4)-[histone H3] + 3 formaldehyde + 3 succinate + 3 CO2. Inhibited by Myc. Its function is as follows. Histone demethylase that specifically demethylates 'Lys-4' of histone H3, thereby playing a central role in histone code. Does not demethylate histone H3 'Lys-9', H3 'Lys-27', H3 'Lys-36', H3 'Lys-79' or H4 'Lys-20'. Specifically demethylates trimethylated H3 'Lys-4'. Required for the correct regulation of homeotic genes during development. Plays a role in the regulation of the circadian rhythm and in maintaining the normal periodicity of the circadian clock. Regulates the expression of clock-controlled genes including tim, per and cry. The polypeptide is Lysine-specific demethylase 5 (Drosophila melanogaster (Fruit fly)).